We begin with the raw amino-acid sequence, 511 residues long: ATP synthase subunit alpha (511 aa).

169–176 (GDRQTGKT) is a binding site for ATP.

Belongs to the ATPase alpha/beta chains family. As to quaternary structure, F-type ATPases have 2 components, CF(1) - the catalytic core - and CF(0) - the membrane proton channel. CF(1) has five subunits: alpha(3), beta(3), gamma(1), delta(1), epsilon(1). CF(0) has three main subunits: a(1), b(2) and c(9-12). The alpha and beta chains form an alternating ring which encloses part of the gamma chain. CF(1) is attached to CF(0) by a central stalk formed by the gamma and epsilon chains, while a peripheral stalk is formed by the delta and b chains.

The protein localises to the cell inner membrane. It carries out the reaction ATP + H2O + 4 H(+)(in) = ADP + phosphate + 5 H(+)(out). Functionally, produces ATP from ADP in the presence of a proton gradient across the membrane. The alpha chain is a regulatory subunit. This Janthinobacterium sp. (strain Marseille) (Minibacterium massiliensis) protein is ATP synthase subunit alpha.